A 217-amino-acid polypeptide reads, in one-letter code: Small ribosomal subunit protein uS3 (217 aa).

Positions 40 to 110 constitute a KH type-2 domain; the sequence is IRDLINKWFN…EVYINIHEVR (71 aa).

This sequence belongs to the universal ribosomal protein uS3 family. Part of the 30S ribosomal subunit. Forms a tight complex with proteins S10 and S14.

Functionally, binds the lower part of the 30S subunit head. Binds mRNA in the 70S ribosome, positioning it for translation. This Rickettsia typhi (strain ATCC VR-144 / Wilmington) protein is Small ribosomal subunit protein uS3.